We begin with the raw amino-acid sequence, 161 residues long: Phosphopantetheine adenylyltransferase (161 aa).

Serine 11 is a binding site for substrate. Residues serine 11–phenylalanine 12 and histidine 19 contribute to the ATP site. 3 residues coordinate substrate: lysine 43, leucine 75, and arginine 89. ATP is bound by residues glycine 90–arginine 92, glutamate 100, and tyrosine 125–serine 131.

This sequence belongs to the bacterial CoaD family. As to quaternary structure, homohexamer. It depends on Mg(2+) as a cofactor.

It is found in the cytoplasm. It carries out the reaction (R)-4'-phosphopantetheine + ATP + H(+) = 3'-dephospho-CoA + diphosphate. The protein operates within cofactor biosynthesis; coenzyme A biosynthesis; CoA from (R)-pantothenate: step 4/5. Its function is as follows. Reversibly transfers an adenylyl group from ATP to 4'-phosphopantetheine, yielding dephospho-CoA (dPCoA) and pyrophosphate. The chain is Phosphopantetheine adenylyltransferase from Staphylococcus epidermidis (strain ATCC 35984 / DSM 28319 / BCRC 17069 / CCUG 31568 / BM 3577 / RP62A).